Here is a 668-residue protein sequence, read N- to C-terminus: Fructose-1,6-bisphosphatase class 3 (668 aa).

Belongs to the FBPase class 3 family. Requires Mn(2+) as cofactor.

The enzyme catalyses beta-D-fructose 1,6-bisphosphate + H2O = beta-D-fructose 6-phosphate + phosphate. It participates in carbohydrate biosynthesis; gluconeogenesis. This is Fructose-1,6-bisphosphatase class 3 from Clostridium botulinum (strain 657 / Type Ba4).